Consider the following 503-residue polypeptide: ATP synthase subunit alpha (503 aa).

Residue 170 to 177 (GDRQTGKT) coordinates ATP.

F-type ATPases have 2 components, CF(1) - the catalytic core - and CF(0) - the membrane proton channel. CF(1) has five subunits: alpha(3), beta(3), gamma(1), delta(1), epsilon(1). CF(0) has four main subunits: a(1), b(1), b'(1) and c(9-12).

It localises to the cellular thylakoid membrane. The catalysed reaction is ATP + H2O + 4 H(+)(in) = ADP + phosphate + 5 H(+)(out). Its activity is regulated as follows. Inhibited by dicyclohexylcarbodiimide. Its function is as follows. Produces ATP from ADP in the presence of a proton gradient across the membrane. The alpha chain is a regulatory subunit. Functionally, the complex from the organism is particularly stable to disruption and remains functional after 6 hrs at 55 degrees Celsius. The chain is ATP synthase subunit alpha from Thermosynechococcus vestitus (strain NIES-2133 / IAM M-273 / BP-1).